Here is a 4814-residue protein sequence, read N- to C-terminus: Nonribosomal peptide synthetase SIDC (4814 aa).

The tract at residues 21-453 (PGPTLLHQLV…MKTSGCHGAA (433 aa)) is adenylation 1. In terms of domain architecture, Carrier 1 spans 528-601 (DLKKSTEPEL…HLVSSIKIID (74 aa)). Serine 562 is modified (O-(pantetheine 4'-phosphoryl)serine). The tract at residues 637-1045 (VQDIIPCTNL…SLLESMRSME (409 aa)) is condensation 1. The adenylation 2 stretch occupies residues 1101–1488 (TYTDLNRNAN…SRVSSATAAV (388 aa)). Carrier domains lie at 1589–1666 (EDWN…HSSH) and 2134–2210 (SSWT…FENG). Residues serine 1626 and serine 2171 each carry the O-(pantetheine 4'-phosphoryl)serine modification. Condensation regions lie at residues 1706–2210 (LQEA…FENG) and 2243–2649 (LPCT…HQHD). Residues 2709–3100 (TFAQLNSIGN…IRSVKNIHDV (392 aa)) are adenylation 3. Residues 3203-3280 (SKDSAGYQKL…DLAVALSTAS (78 aa)) form the Carrier 4 domain. Residue serine 3240 is modified to O-(pantetheine 4'-phosphoryl)serine. The segment at 3319–3732 (YIYPCSPLQQ…VQVETALVDA (414 aa)) is condensation 4. One can recognise a Carrier 5 domain in the interval 3747-3823 (EVWGPAADVL…YLSSLVMRLT (77 aa)). O-(pantetheine 4'-phosphoryl)serine is present on serine 3784. Residues 3857-4258 (DILPTTPLQD…YVLRHAEEDV (402 aa)) are condensation 5. Residues 4295–4368 (NATSLAIRKV…HMAEQVAALG (74 aa)) enclose the Carrier 6 domain. Position 4329 is an O-(pantetheine 4'-phosphoryl)serine (serine 4329). The condensation 6 stretch occupies residues 4504–4686 (ETLLRLRIHH…HEDMQKITAD (183 aa)).

It belongs to the NRP synthetase family. Pantetheine 4'-phosphate serves as cofactor.

It functions in the pathway siderophore biosynthesis. Its function is as follows. Nonribosomal peptide synthetase; part of the gene cluster that mediates the biosynthesis of at least 11 siderophores, including beauverichelin A, dimerumic acid (DA), Na-dimethyl coprogen (NADC), eleutherazine B, ferricrocin (FC), fusarinine A, fusarinine C (FsC), metachelin A, mevalonolactone, rhodotorulic acid (RA) and tenellin. This cocktail of siderophores for iron metabolism is essential for virulence, and more specifically for the fungal virulence in penetrating through the host cuticle. Siderophore synthesis is also involved in conidial germination under iron-deficient conditions. SIDC catalyzes the assembly of ferricrocin whereas SIDD catalyzes the assembly of fusarinine C. The sequence is that of Nonribosomal peptide synthetase SIDC from Beauveria bassiana (strain ARSEF 2860) (White muscardine disease fungus).